Reading from the N-terminus, the 429-residue chain is Tyrosine-protein kinase STYK1 (429 aa).

A helical membrane pass occupies residues 30–50; that stretch reads VIIVPALLVGGFLILLAIILW. The interval 58 to 83 is disordered; that stretch reads SQRQSPGPRGTASVPASRGRSQEAAG. Residues 119-390 enclose the Protein kinase domain; sequence LEVLEQIHSG…GQLLQRLEAA (272 aa). ATP is bound by residues 125–133 and Lys-152; that span reads IHSGSCGTL. Asp-256 functions as the Proton acceptor in the catalytic mechanism.

It belongs to the protein kinase superfamily. Tyr protein kinase family. Highly expressed in colon and small intestine. Weakly or not expressed in spleen, skeletal muscle, liver, kidney, heart and brain. Expressed in transformed kidney cell lines (COS-1 and HEK293T).

The protein resides in the membrane. It carries out the reaction L-tyrosyl-[protein] + ATP = O-phospho-L-tyrosyl-[protein] + ADP + H(+). In terms of biological role, probable tyrosine protein-kinase, which has strong transforming capabilities on a variety of cell lines including NIH 3T3 fibroblasts and on athymic nude mice. When overexpressed, it can also induce tumor cell invasion as well as metastasis in distant organs. May act by activating both MAP kinase and phosphatidylinositol 3'-kinases (PI3K) pathways. The polypeptide is Tyrosine-protein kinase STYK1 (Styk1) (Mus musculus (Mouse)).